The sequence spans 216 residues: Serine acetyltransferase (216 aa).

It belongs to the transferase hexapeptide repeat family.

The protein resides in the cytoplasm. It carries out the reaction L-serine + acetyl-CoA = O-acetyl-L-serine + CoA. It participates in amino-acid biosynthesis; L-cysteine biosynthesis; L-cysteine from L-serine: step 1/2. This is Serine acetyltransferase (cysE) from Staphylococcus xylosus.